The chain runs to 122 residues: Small ribosomal subunit protein uS13 (122 aa).

The interval arginine 93–lysine 122 is disordered. Over residues glutamine 101 to lysine 122 the composition is skewed to basic residues.

Belongs to the universal ribosomal protein uS13 family. In terms of assembly, part of the 30S ribosomal subunit. Forms a loose heterodimer with protein S19. Forms two bridges to the 50S subunit in the 70S ribosome.

Functionally, located at the top of the head of the 30S subunit, it contacts several helices of the 16S rRNA. In the 70S ribosome it contacts the 23S rRNA (bridge B1a) and protein L5 of the 50S subunit (bridge B1b), connecting the 2 subunits; these bridges are implicated in subunit movement. Contacts the tRNAs in the A and P-sites. This Chlamydia pneumoniae (Chlamydophila pneumoniae) protein is Small ribosomal subunit protein uS13.